The primary structure comprises 312 residues: uncharacterized protein (312 aa).

The protein localises to the mitochondrion. This is an uncharacterized protein from Schizosaccharomyces pombe (strain 972 / ATCC 24843) (Fission yeast).